We begin with the raw amino-acid sequence, 91 residues long: Early E3B 10.4 kDa protein (91 aa).

Residues 1-22 (MIPRNFFFTILICAFNVCATFT) form the signal peptide. The Lumenal portion of the chain corresponds to 23–34 (AVATASPDCIGP). A helical membrane pass occupies residues 35–60 (FASYALFAFVTCICVCSIVCLVINFF). Topologically, residues 61-91 (QLVDWIFVRIAYLRHHPEYRNQNVAALLRLI) are cytoplasmic.

Belongs to the adenoviridae E3B family.

The protein resides in the host endoplasmic reticulum membrane. Its function is as follows. Down-regulates the EGF receptor. This Homo sapiens (Human) protein is Early E3B 10.4 kDa protein.